A 498-amino-acid polypeptide reads, in one-letter code: ATP synthase subunit alpha 1 (498 aa).

It belongs to the ATPase alpha/beta chains family. F-type ATPases have 2 components, CF(1) - the catalytic core - and CF(0) - the membrane proton channel. CF(1) has five subunits: alpha(3), beta(3), gamma(1), delta(1), epsilon(1). CF(0) has three main subunits: a(1), b(2) and c(9-12). The alpha and beta chains form an alternating ring which encloses part of the gamma chain. CF(1) is attached to CF(0) by a central stalk formed by the gamma and epsilon chains, while a peripheral stalk is formed by the delta and b chains.

It localises to the cell membrane. It carries out the reaction ATP + H2O + 4 H(+)(in) = ADP + phosphate + 5 H(+)(out). Its function is as follows. Produces ATP from ADP in the presence of a proton gradient across the membrane. The alpha chain is a regulatory subunit. The protein is ATP synthase subunit alpha 1 of Listeria monocytogenes serotype 4b (strain F2365).